A 330-amino-acid polypeptide reads, in one-letter code: Aspartate--ammonia ligase (330 aa).

It belongs to the class-II aminoacyl-tRNA synthetase family. AsnA subfamily.

It localises to the cytoplasm. The catalysed reaction is L-aspartate + NH4(+) + ATP = L-asparagine + AMP + diphosphate + H(+). The protein operates within amino-acid biosynthesis; L-asparagine biosynthesis; L-asparagine from L-aspartate (ammonia route): step 1/1. This Haemophilus influenzae (strain PittEE) protein is Aspartate--ammonia ligase.